The primary structure comprises 403 residues: GTPase Obg (403 aa).

The 159-residue stretch at 1–159 (MKFIDESLIR…RDLLLELMLL (159 aa)) folds into the Obg domain. The 174-residue stretch at 160–333 (ADVGMLGFPN…LCRDIMDFII (174 aa)) folds into the OBG-type G domain. Residues 166–173 (GFPNAGKS), 191–195 (FTTLV), 213–216 (DIPG), 283–286 (NKID), and 314–316 (SAA) contribute to the GTP site. 2 residues coordinate Mg(2+): serine 173 and threonine 193. A disordered region spans residues 363 to 403 (EYQFDDDEDWDDDWTEEDDDEDWDDDWTEEDDEGIEFIYKP). A compositionally biased stretch (acidic residues) spans 365 to 397 (QFDDDEDWDDDWTEEDDDEDWDDDWTEEDDEGI).

The protein belongs to the TRAFAC class OBG-HflX-like GTPase superfamily. OBG GTPase family. As to quaternary structure, monomer. The cofactor is Mg(2+).

It localises to the cytoplasm. In terms of biological role, an essential GTPase which binds GTP, GDP and possibly (p)ppGpp with moderate affinity, with high nucleotide exchange rates and a fairly low GTP hydrolysis rate. Plays a role in control of the cell cycle, stress response, ribosome biogenesis and in those bacteria that undergo differentiation, in morphogenesis control. This chain is GTPase Obg, found in Haemophilus influenzae (strain PittEE).